The following is a 118-amino-acid chain: MKFQPLGERVLVERLEEENKTSSGIIIPDNAKEKPLMGVVKAVSHKISEGCKCVKEGDVIAFGKYKGAEIVLDGVEYMVLELEDILGIVGSGSCCHTGNHDHKHAKEHEACCHDHKKH.

This sequence belongs to the GroES chaperonin family. As to quaternary structure, heptamer of 7 subunits arranged in a ring. Interacts with the chaperonin GroEL.

Its subcellular location is the cytoplasm. Functionally, together with the chaperonin GroEL, plays an essential role in assisting protein folding. The GroEL-GroES system forms a nano-cage that allows encapsulation of the non-native substrate proteins and provides a physical environment optimized to promote and accelerate protein folding. GroES binds to the apical surface of the GroEL ring, thereby capping the opening of the GroEL channel. This is Co-chaperonin GroES from Helicobacter pylori (strain G27).